A 389-amino-acid chain; its full sequence is Chaperone protein DnaJ (389 aa).

Residues 6-70 (DYYEVLGLAK…QKKAAYDQYG (65 aa)) enclose the J domain. The segment at 142–224 (GVEKEIKYNR…CHGTGHEKKA (83 aa)) adopts a CR-type zinc-finger fold. 8 residues coordinate Zn(2+): C155, C158, C172, C175, C198, C201, C212, and C215. CXXCXGXG motif repeat units follow at residues 155 to 162 (CATCGGNG), 172 to 179 (CHKCHGSG), 198 to 205 (CDVCHGTG), and 212 to 219 (CPTCHGTG).

It belongs to the DnaJ family. Homodimer. It depends on Zn(2+) as a cofactor.

Its subcellular location is the cytoplasm. In terms of biological role, participates actively in the response to hyperosmotic and heat shock by preventing the aggregation of stress-denatured proteins and by disaggregating proteins, also in an autonomous, DnaK-independent fashion. Unfolded proteins bind initially to DnaJ; upon interaction with the DnaJ-bound protein, DnaK hydrolyzes its bound ATP, resulting in the formation of a stable complex. GrpE releases ADP from DnaK; ATP binding to DnaK triggers the release of the substrate protein, thus completing the reaction cycle. Several rounds of ATP-dependent interactions between DnaJ, DnaK and GrpE are required for fully efficient folding. Also involved, together with DnaK and GrpE, in the DNA replication of plasmids through activation of initiation proteins. This chain is Chaperone protein DnaJ, found in Enterococcus faecalis (strain ATCC 700802 / V583).